Reading from the N-terminus, the 123-residue chain is Small ribosomal subunit protein uS12 (123 aa).

Residue aspartate 89 is modified to 3-methylthioaspartic acid.

Belongs to the universal ribosomal protein uS12 family. As to quaternary structure, part of the 30S ribosomal subunit. Contacts proteins S8 and S17. May interact with IF1 in the 30S initiation complex.

Its function is as follows. With S4 and S5 plays an important role in translational accuracy. In terms of biological role, interacts with and stabilizes bases of the 16S rRNA that are involved in tRNA selection in the A site and with the mRNA backbone. Located at the interface of the 30S and 50S subunits, it traverses the body of the 30S subunit contacting proteins on the other side and probably holding the rRNA structure together. The combined cluster of proteins S8, S12 and S17 appears to hold together the shoulder and platform of the 30S subunit. This is Small ribosomal subunit protein uS12 from Pelagibacter ubique (strain HTCC1062).